A 955-amino-acid polypeptide reads, in one-letter code: 26S proteasome non-ATPase regulatory subunit 1 (955 aa).

The disordered stretch occupies residues 279-313; the sequence is PGSTNTGTVPGSEKDSDAMEAEEKPGSTCVGKSAE. Residues 290-303 show a composition bias toward basic and acidic residues; that stretch reads SEKDSDAMEAEEKP. 10 PC repeats span residues 403 to 436, 441 to 474, 476 to 510, 511 to 545, 547 to 580, 581 to 616, 617 to 649, 651 to 685, 686 to 726, and 729 to 761; these read TATA…PGSA, GGLY…DIVR, GGSL…VTGE, AAGL…EKIL, GLAV…ILRR, SGMY…DVRR, AAVE…PHVR, GAAM…YVRQ, GALI…DVMA, and GAIL…PSVV. Disordered regions lie at residues 839 to 879 and 932 to 955; these read AKKK…NFQL and AHGP…YIDD. Composition is skewed to basic and acidic residues over residues 842 to 854 and 861 to 874; these read KEKE…KEEE and TEKK…KEPE. The segment covering 938–955 has biased composition (acidic residues); the sequence is EEEEQEPEPPEPFEYIDD.

Belongs to the proteasome subunit S1 family. As to quaternary structure, component of the 19S proteasome regulatory particle complex. The 26S proteasome consists of a 20S core particle (CP) and two 19S regulatory subunits (RP). The regulatory particle is made of a lid composed of 9 subunits, a base containing 6 ATPases and few additional components including PSMD1. Interacts with ADRM1.

Functionally, component of the 26S proteasome, a multiprotein complex involved in the ATP-dependent degradation of ubiquitinated proteins. This complex plays a key role in the maintenance of protein homeostasis by removing misfolded or damaged proteins, which could impair cellular functions, and by removing proteins whose functions are no longer required. Therefore, the proteasome participates in numerous cellular processes, including cell cycle progression, apoptosis, or DNA damage repair. The chain is 26S proteasome non-ATPase regulatory subunit 1 (PSMD1) from Gallus gallus (Chicken).